Reading from the N-terminus, the 123-residue chain is Small ribosomal subunit protein uS13 (123 aa).

Residues 95-123 are disordered; it reads GLPVRGQRTKTNARTRKGPARTVAGKKKK.

The protein belongs to the universal ribosomal protein uS13 family. Part of the 30S ribosomal subunit. Forms a loose heterodimer with protein S19. Forms two bridges to the 50S subunit in the 70S ribosome.

Functionally, located at the top of the head of the 30S subunit, it contacts several helices of the 16S rRNA. In the 70S ribosome it contacts the 23S rRNA (bridge B1a) and protein L5 of the 50S subunit (bridge B1b), connecting the 2 subunits; these bridges are implicated in subunit movement. Contacts the tRNAs in the A and P-sites. This is Small ribosomal subunit protein uS13 from Heliobacterium modesticaldum (strain ATCC 51547 / Ice1).